A 94-amino-acid chain; its full sequence is MLKPLGDRVVLKIEEKEQTVGGFVLAGSAQEKTKTAQVVATGQGVRTLNGDLVAPSVKTGDRVLVEAHAGLDVKDGDEKYIIVGEVNILAIIEE.

This sequence belongs to the GroES chaperonin family. Heptamer of 7 subunits arranged in a ring. Interacts with the chaperonin GroEL.

The protein localises to the cytoplasm. Together with the chaperonin GroEL, plays an essential role in assisting protein folding. The GroEL-GroES system forms a nano-cage that allows encapsulation of the non-native substrate proteins and provides a physical environment optimized to promote and accelerate protein folding. GroES binds to the apical surface of the GroEL ring, thereby capping the opening of the GroEL channel. The sequence is that of Co-chaperonin GroES from Streptococcus pneumoniae (strain 70585).